A 132-amino-acid polypeptide reads, in one-letter code: Histone H2B.1 (132 aa).

Positions 1–13 (MSAKASKAPASKA) are enriched in low complexity. Positions 1–39 (MSAKASKAPASKAPAEKKPAAKKTSSSTDPSKKRTKARK) are disordered. Position 7 is an N6-acetyllysine; alternate (Lys-7). Lys-7 participates in a covalent cross-link: Glycyl lysine isopeptide (Lys-Gly) (interchain with G-Cter in SUMO); alternate. At Ser-11 the chain carries Phosphoserine. Lys-12 bears the N6-acetyllysine mark. An N6-acetyllysine; alternate modification is found at Lys-17. A Glycyl lysine isopeptide (Lys-Gly) (interchain with G-Cter in SUMO); alternate cross-link involves residue Lys-17. Lys-18 participates in a covalent cross-link: Glycyl lysine isopeptide (Lys-Gly) (interchain with G-Cter in SUMO). Lys-125 is covalently cross-linked (Glycyl lysine isopeptide (Lys-Gly) (interchain with G-Cter in ubiquitin)).

The protein belongs to the histone H2B family. The nucleosome is a histone octamer containing two molecules each of H2A, H2B, H3 and H4 assembled in one H3-H4 heterotetramer and two H2A-H2B heterodimers. The octamer wraps approximately 147 bp of DNA. Monoubiquitinated by the UBC2-BRE1 complex to form H2BK123ub1. H2BK123ub1 gives a specific tag for epigenetic transcriptional activation and is also prerequisite for H3K4me and H3K79me formation. H2BK123ub1 also modulates the formation of double-strand breaks during meiosis and is a prerequisite for DNA-damage checkpoint activation. In terms of processing, phosphorylated by STE20 to form H2BS10ph during progression through meiotic prophase. May be correlated with chromosome condensation. Post-translationally, acetylated by GCN5 to form H2BK11ac and H2BK16ac. H2BK16ac can also be formed by ESA1. Acetylation of N-terminal lysines and particularly formation of H2BK11acK16ac has a positive effect on transcription. Sumoylation to form H2BK6su and probably also H2BK16su or H2BK17su, occurs preferentially near the telomeres and represses gene transcription.

It is found in the nucleus. The protein localises to the chromosome. Functionally, core component of nucleosome. Nucleosomes wrap and compact DNA into chromatin, limiting DNA accessibility to the cellular machineries which require DNA as a template. Histones thereby play a central role in transcription regulation, DNA repair, DNA replication and chromosomal stability. DNA accessibility is regulated via a complex set of post-translational modifications of histones, also called histone code, and nucleosome remodeling. The polypeptide is Histone H2B.1 (HTB1) (Kluyveromyces lactis (strain ATCC 8585 / CBS 2359 / DSM 70799 / NBRC 1267 / NRRL Y-1140 / WM37) (Yeast)).